The following is a 162-amino-acid chain: Selenoprotein F (162 aa).

The N-terminal stretch at 1-28 (MAAGQGGWLRPALGLRLLLATAFQAVSA) is a signal peptide. Position 93 (Sec93) is a non-standard amino acid, selenocysteine.

Belongs to the selenoprotein M/F family. In terms of assembly, forms a tight complex with UGGT1/UGCGL1. Interacts with UGGT2/UGCGL2. Interacts with RDH11.

It localises to the endoplasmic reticulum lumen. Its function is as follows. May be involved in redox reactions associated with the formation of disulfide bonds. May contribute to the quality control of protein folding in the endoplasmic reticulum. May regulate protein folding by enhancing the catalytic activity of UGGT1/UGCGL1 and UGGT2/UGCGL2. This is Selenoprotein F from Mus musculus (Mouse).